The sequence spans 223 residues: Cytochrome c biogenesis ATP-binding export protein CcmA (223 aa).

The ABC transporter domain maps to 20–222 (LAAHALTYSR…PTRLLHLKKA (203 aa)). ATP is bound at residue 52 to 59 (GPNGIGKT).

The protein belongs to the ABC transporter superfamily. CcmA exporter (TC 3.A.1.107) family. In terms of assembly, the complex is composed of two ATP-binding proteins (CcmA) and two transmembrane proteins (CcmB).

It is found in the cell inner membrane. It carries out the reaction heme b(in) + ATP + H2O = heme b(out) + ADP + phosphate + H(+). Part of the ABC transporter complex CcmAB involved in the biogenesis of c-type cytochromes; once thought to export heme, this seems not to be the case, but its exact role is uncertain. Responsible for energy coupling to the transport system. The protein is Cytochrome c biogenesis ATP-binding export protein CcmA of Xylella fastidiosa (strain 9a5c).